The sequence spans 549 residues: Glucose-6-phosphate isomerase (549 aa).

Residue Glu-353 is the Proton donor of the active site. Residues His-384 and Lys-513 contribute to the active site.

It belongs to the GPI family.

The protein resides in the cytoplasm. It catalyses the reaction alpha-D-glucose 6-phosphate = beta-D-fructose 6-phosphate. Its pathway is carbohydrate biosynthesis; gluconeogenesis. The protein operates within carbohydrate degradation; glycolysis; D-glyceraldehyde 3-phosphate and glycerone phosphate from D-glucose: step 2/4. In terms of biological role, catalyzes the reversible isomerization of glucose-6-phosphate to fructose-6-phosphate. This Bartonella bacilliformis (strain ATCC 35685 / KC583 / Herrer 020/F12,63) protein is Glucose-6-phosphate isomerase.